Consider the following 475-residue polypeptide: Ribulose bisphosphate carboxylase large chain (475 aa).

The propeptide occupies Met-1–Ser-2. Pro-3 bears the N-acetylproline mark. The residue at position 14 (Lys-14) is an N6,N6,N6-trimethyllysine. Positions 123 and 173 each coordinate substrate. Residue Lys-175 is the Proton acceptor of the active site. Substrate is bound at residue Lys-177. Mg(2+) contacts are provided by Lys-201, Asp-203, and Glu-204. Residue Lys-201 is modified to N6-carboxylysine. His-294 (proton acceptor) is an active-site residue. The substrate site is built by Arg-295, His-327, and Ser-379.

Belongs to the RuBisCO large chain family. Type I subfamily. As to quaternary structure, heterohexadecamer of 8 large chains and 8 small chains; disulfide-linked. The disulfide link is formed within the large subunit homodimers. Mg(2+) serves as cofactor. In terms of processing, the disulfide bond which can form in the large chain dimeric partners within the hexadecamer appears to be associated with oxidative stress and protein turnover.

The protein resides in the plastid. It is found in the chloroplast. The catalysed reaction is 2 (2R)-3-phosphoglycerate + 2 H(+) = D-ribulose 1,5-bisphosphate + CO2 + H2O. It carries out the reaction D-ribulose 1,5-bisphosphate + O2 = 2-phosphoglycolate + (2R)-3-phosphoglycerate + 2 H(+). Its function is as follows. RuBisCO catalyzes two reactions: the carboxylation of D-ribulose 1,5-bisphosphate, the primary event in carbon dioxide fixation, as well as the oxidative fragmentation of the pentose substrate in the photorespiration process. Both reactions occur simultaneously and in competition at the same active site. In Cryptomeria japonica (Japanese cedar), this protein is Ribulose bisphosphate carboxylase large chain.